The sequence spans 168 residues: Ribosome-binding factor A (168 aa).

A compositionally biased stretch (basic and acidic residues) spans 125-138 (RVREGAKHAGDSDP). A disordered region spans residues 125 to 168 (RVREGAKHAGDSDPYRVLGEGDLEGPATGGPDVEDEGGANSHDR).

This sequence belongs to the RbfA family. In terms of assembly, monomer. Binds 30S ribosomal subunits, but not 50S ribosomal subunits or 70S ribosomes.

The protein resides in the cytoplasm. Functionally, one of several proteins that assist in the late maturation steps of the functional core of the 30S ribosomal subunit. Associates with free 30S ribosomal subunits (but not with 30S subunits that are part of 70S ribosomes or polysomes). Required for efficient processing of 16S rRNA. May interact with the 5'-terminal helix region of 16S rRNA. This chain is Ribosome-binding factor A, found in Mycolicibacterium gilvum (strain PYR-GCK) (Mycobacterium gilvum (strain PYR-GCK)).